Reading from the N-terminus, the 237-residue chain is uncharacterized protein (237 aa).

A Response regulatory domain is found at S3–L116. 4-aspartylphosphate is present on D54. The HTH LytTR-type domain maps to I135–F236.

This is an uncharacterized protein from Vibrio cholerae serotype O1 (strain ATCC 39315 / El Tor Inaba N16961).